We begin with the raw amino-acid sequence, 435 residues long: GTPase Der (435 aa).

EngA-type G domains follow at residues 4–167 (PTLA…PSED) and 175–350 (IKFS…ENQT). GTP is bound by residues 10-17 (GRPNVGKS), 57-61 (DTGGI), 119-122 (NKVD), 181-188 (GRPNVGKS), 228-232 (DTAGI), and 293-296 (NKWD). One can recognise a KH-like domain in the interval 351–435 (RRIQSSVLND…PIHIIARKRK (85 aa)).

Belongs to the TRAFAC class TrmE-Era-EngA-EngB-Septin-like GTPase superfamily. EngA (Der) GTPase family. Associates with the 50S ribosomal subunit.

GTPase that plays an essential role in the late steps of ribosome biogenesis. The sequence is that of GTPase Der from Lacticaseibacillus paracasei (strain ATCC 334 / BCRC 17002 / CCUG 31169 / CIP 107868 / KCTC 3260 / NRRL B-441) (Lactobacillus paracasei).